The primary structure comprises 592 residues: E3 ubiquitin-protein ligase RNF180 (592 aa).

At 1–564 (MKRSKELITK…DSRGWWFDMD (564 aa)) the chain is on the cytoplasmic side. A Phosphoserine modification is found at Ser-230. The RING-type zinc-finger motif lies at 432-474 (CAVCLDVYFNPYMCYPCRHIFCEPCLRTLAKDNPSSTPCPLCR). Residues 565 to 585 (MVIIYIYSVNWVIGFIVFCFL) form a helical membrane-spanning segment. Topologically, residues 586-592 (CYFFFPF) are extracellular.

In terms of assembly, interacts with ZIC2.

It is found in the endoplasmic reticulum membrane. Its subcellular location is the nucleus envelope. The enzyme catalyses S-ubiquitinyl-[E2 ubiquitin-conjugating enzyme]-L-cysteine + [acceptor protein]-L-lysine = [E2 ubiquitin-conjugating enzyme]-L-cysteine + N(6)-ubiquitinyl-[acceptor protein]-L-lysine.. Its pathway is protein modification; protein ubiquitination. In terms of biological role, E3 ubiquitin-protein ligase which promotes polyubiquitination and degradation by the proteasome pathway of ZIC2. The protein is E3 ubiquitin-protein ligase RNF180 (RNF180) of Pongo abelii (Sumatran orangutan).